The following is a 322-amino-acid chain: Cysteine protease YopT (322 aa).

Active-site residues include Cys-139, His-258, and Asp-274.

This sequence belongs to the peptidase C58 family. In terms of assembly, interacts with human ARHA.

The protein localises to the secreted. In terms of biological role, cysteine protease, which is translocated into infected cells and plays a central role in pathogenesis by cleaving the C-terminus end of the human small GTPase RhoA/ARHA, a regulator of cytoskeleton. Once cleaved, ARHA loses its lipid modification, and is released from the cell membrane, leading to the subsequent disruption of actin cytoskeleton of the host cell. The chain is Cysteine protease YopT (yopT) from Yersinia pseudotuberculosis serotype I (strain IP32953).